The primary structure comprises 229 residues: Large ribosomal subunit protein uL1 (229 aa).

As to quaternary structure, part of the 50S ribosomal subunit.

Functionally, directly binds to 23S rRNA. Forms what is known as the L1 stalk, which protrudes beyond the 70S ribosome surface. The stalk is preferentially stabilized in 70S versus 50S crystals. Interacts with the E site tRNA, blocking the exit path. This blockage implies that this section of the ribosome must be able to move to release the deacetylated tRNA. Protein L1 is also a translational repressor protein, it controls the translation of the L11 operon by binding to its mRNA. The sequence is that of Large ribosomal subunit protein uL1 (rplA) from Thermus thermophilus (strain ATCC 27634 / DSM 579 / HB8).